Consider the following 160-residue polypeptide: Protein CrtK (160 aa).

5 helical membrane passes run 3 to 23, 37 to 57, 76 to 96, 101 to 121, and 129 to 149; these read LTLF…GAIF, WVPP…LMSI, LAFW…FFGL, GGML…VLFW, and LMFV…FSVW.

This sequence belongs to the TspO/BZRP family.

Its subcellular location is the cell inner membrane. The protein operates within carotenoid biosynthesis; spheroidene biosynthesis. The chain is Protein CrtK (crtK) from Rhodobacter capsulatus (strain ATCC BAA-309 / NBRC 16581 / SB1003).